Here is a 288-residue protein sequence, read N- to C-terminus: MSAVIIDGKAVARRVRENVAREVAEFRDRTGIQPGLATVLVGDDPASAVYVGGKRRACVEAGMADLHQHLPADTSQEKVAALLDDLAADPAVSGILLQLPVPEGLDGAALVGRIPPGKDVDGLTTASVGLLARGLPGLRPCTPSGIIELLDSYDVELSGTPTVVVGRSELVGRPVAALLVGRNATLTICHSRTRDLAAVCRGADVLVVAAGKQAIIGADAVKPGATVIDVGMHRTPQGLRGDVDFEAVREVAGKLTPVPGGVGPMTIAMLLRNTLLAAQAATGTDGPG.

NADP(+) is bound by residues Gly-166–Ser-168 and Ser-191.

This sequence belongs to the tetrahydrofolate dehydrogenase/cyclohydrolase family. In terms of assembly, homodimer.

It catalyses the reaction (6R)-5,10-methylene-5,6,7,8-tetrahydrofolate + NADP(+) = (6R)-5,10-methenyltetrahydrofolate + NADPH. The enzyme catalyses (6R)-5,10-methenyltetrahydrofolate + H2O = (6R)-10-formyltetrahydrofolate + H(+). The protein operates within one-carbon metabolism; tetrahydrofolate interconversion. Its function is as follows. Catalyzes the oxidation of 5,10-methylenetetrahydrofolate to 5,10-methenyltetrahydrofolate and then the hydrolysis of 5,10-methenyltetrahydrofolate to 10-formyltetrahydrofolate. The sequence is that of Bifunctional protein FolD 2 from Frankia casuarinae (strain DSM 45818 / CECT 9043 / HFP020203 / CcI3).